A 442-amino-acid chain; its full sequence is Hydrolase phmG (442 aa).

Ser259 acts as the Nucleophile in catalysis.

It belongs to the AB hydrolase superfamily. FUS2 hydrolase family. Homodimer.

The protein operates within mycotoxin biosynthesis. Its function is as follows. Hydrolyase; part of the gene cluster that mediates the biosynthesis of the mycotoxins phomacins, leucine-derived cytochalasans with potent actin polymerization-inhibitory activities and monocot-specific antigerminative activities. The first step in the pathway is catalyzed by the hybrid PKS-NRPS phmA, assisted by the enoyl reductase phmE, that are responsible for fusion of the leucine precursor and the polyketide backbone to produce a 2-pyrrolidone intermediate. The polyketide synthase module (PKS) of phmA is responsible for the synthesis of the polyketide backbone and the downstream nonribosomal peptide synthetase (NRPS) amidates the carboxyl end of the polyketide with the leucine precursor. Because phmA lacks a designated enoylreductase (ER) domain, the required activity is provided the enoyl reductase phmE. Reduction by the hydrolyase phmG, followed by dehydration and intra-molecular Diels-Alder cyclization by the Diels-Alderase phmD then yield the required isoindolone-fused macrocycle. A number of oxidative steps catalyzed by the tailoring cytochrome P450 monooxygenase phmB, the FAD-linked oxidoreductase phmC and the short-chain dehydrogenase/reductase phmF, are further required to afford the final products, phomacin D and phomacin E. The protein is Hydrolase phmG of Phaeosphaeria nodorum (strain SN15 / ATCC MYA-4574 / FGSC 10173) (Glume blotch fungus).